We begin with the raw amino-acid sequence, 113 residues long: Prostate and testis expressed protein 2 (113 aa).

Positions 1-26 are cleaved as a signal peptide; sequence MLVLFLLGTVFLLCPYWGELHDPIKA. The UPAR/Ly6 domain occupies 29 to 110; the sequence is IMCYECKKYH…CDHSNYCNLP (82 aa). Intrachain disulfides connect Cys31–Cys57, Cys34–Cys42, Cys49–Cys80, and Cys84–Cys101.

Belongs to the PATE family. In terms of tissue distribution, isoform 1 and isoform 2 are expressed in prostate and testis. Isoform 2 is expressed in male and female brain at equivalent levels, in particular in cerebellum, cerebral cortex, corpus callosum, occipital, parrietal and temporal lobes, and pons, but not in amygdala, cerebral peduncle, hippocampus and thalamus.

It localises to the secreted. In Homo sapiens (Human), this protein is Prostate and testis expressed protein 2 (PATE2).